We begin with the raw amino-acid sequence, 805 residues long: MKYDFTEIEKKWQAYWEQHQTFKATEEPNKPKYYVLDMFPYPSGSGLHVGHLEGYTASDITARYKRLKGFSVLHPMGWDAFGLPAEQYAIKTGTHPRLTTETNVANFKSTLQRMGFSYDWSREINTTDPGYVKWTQWIFLKLYEKGLAYVDDVPVNWCEELKVVLANEEVDEKVNDGYTVVRRPLRQWMLKITAYAERLLTDLDEVDWPESVKEMQRNWIGKSVGAELDFYLAGTDEKFRIFTTRPDTVFGATYMVLSPEHPLLDKITTDEHKSAVAAYREEAERKSDLERTGLQKEKTGVFTGSYALNPATGKEIPIWTSDFVLMGYGTGAIMSVPAHDERDWEFAKKFGIPIVEVIKSPHSVQEAVFAGKDSVCTNSENAEISINGLAYEEAFEKITDWFEKKGLGQRKVNYKLRDWLFSRQRYWGEPIPIKHYEDGAERAETELPLNLPEVSAYQPSGTGESPLANIAEWLYGEDEHGKFRRETNTMPQWAGSCWYYLRFIDPDNPNEAVSPEKEKYWMNVDLYIGGAEHAVLHLLYARFWHKVLYDVGVVSTKEPFRKLFNQGMILGEDNEKMSKSRGNVITADSVMSGYGADAVRLYEMFLGPLEQVKPWSTNGIEGISRFLGKVWRLVYPNEADGTVQVTDDAPSETVLRRMHKTIKKVGEDTETLKFNTAISEMMIYVNELQKEKCRSRTAIENLLLMLSPFAPHICEELWQALGHEESITFAKFPEYDATLAKDDVVTIAVQVNGKLRGTFDAAAGLSKDDMIAEAMKVESVIKFTEGKEIVKQIAVPNKLVNLVVK.

Residues 40–51 (PYPSGSGLHVGH) carry the 'HIGH' region motif. The 'KMSKS' region signature appears at 576-580 (KMSKS). Lys-579 contributes to the ATP binding site.

This sequence belongs to the class-I aminoacyl-tRNA synthetase family.

Its subcellular location is the cytoplasm. The enzyme catalyses tRNA(Leu) + L-leucine + ATP = L-leucyl-tRNA(Leu) + AMP + diphosphate. The sequence is that of Leucine--tRNA ligase from Chloroherpeton thalassium (strain ATCC 35110 / GB-78).